The sequence spans 245 residues: Orotidine 5'-phosphate decarboxylase (245 aa).

Substrate contacts are provided by residues Asp-22, Lys-44, 71 to 80, Thr-131, Arg-192, Gln-201, Gly-221, and Arg-222; that span reads DLKFHDIPNT. Lys-73 (proton donor) is an active-site residue.

This sequence belongs to the OMP decarboxylase family. Type 1 subfamily. Homodimer.

It carries out the reaction orotidine 5'-phosphate + H(+) = UMP + CO2. The protein operates within pyrimidine metabolism; UMP biosynthesis via de novo pathway; UMP from orotate: step 2/2. Functionally, catalyzes the decarboxylation of orotidine 5'-monophosphate (OMP) to uridine 5'-monophosphate (UMP). The polypeptide is Orotidine 5'-phosphate decarboxylase (Shigella flexneri).